A 500-amino-acid chain; its full sequence is Cytochrome P450 monooxygenase ausR (500 aa).

Residues 15–35 form a helical membrane-spanning segment; it reads GVGLYILWTVAVLFVIFKLLA. C439 contacts heme.

The protein belongs to the cytochrome P450 family. Heme is required as a cofactor.

It localises to the membrane. Its pathway is secondary metabolite biosynthesis; terpenoid biosynthesis. Its function is as follows. Cytochrome P450 monooxygenase; part of the gene cluster that mediates the biosynthesis of calidodehydroaustin, a fungal meroterpenoid. The first step of the pathway is the synthesis of 3,5-dimethylorsellinic acid by the polyketide synthase ausA. 3,5-dimethylorsellinic acid is then prenylated by the polyprenyl transferase ausN. Further epoxidation by the FAD-dependent monooxygenase ausM and cyclization by the probable terpene cyclase ausL lead to the formation of protoaustinoid A. Protoaustinoid A is then oxidized to spiro-lactone preaustinoid A3 by the combined action of the FAD-binding monooxygenases ausB and ausC, and the dioxygenase ausE. Acid-catalyzed keto-rearrangement and ring contraction of the tetraketide portion of preaustinoid A3 by ausJ lead to the formation of preaustinoid A4. The aldo-keto reductase ausK, with the help of ausH, is involved in the next step by transforming preaustinoid A4 into isoaustinone which is in turn hydroxylated by the P450 monooxygenase ausI to form austinolide. The cytochrome P450 monooxygenase ausG modifies austinolide to austinol. Austinol is further acetylated to austin by the O-acetyltransferase ausP, which spontaneously changes to dehydroaustin. The cytochrome P450 monooxygenase ausR then converts dehydroaustin is into 7-dehydrodehydroaustin. The hydroxylation catalyzed by ausR permits the O-acetyltransferase ausQ to add an additional acetyl group to the molecule, leading to the formation of acetoxydehydroaustin. The short chain dehydrogenase ausT catalyzes the reduction of the double bond present between carbon atoms 1 and 2 to convert 7-dehydrodehydroaustin into 1,2-dihydro-7-hydroxydehydroaustin. AusQ catalyzes not only an acetylation reaction but also the addition of the PKS ausV diketide product to 1,2-dihydro-7-hydroxydehydroaustin, forming precalidodehydroaustin. Finally, the iron/alpha-ketoglutarate-dependent dioxygenase converts precalidodehydroaustin into calidodehydroaustin. This Aspergillus calidoustus protein is Cytochrome P450 monooxygenase ausR.